A 959-amino-acid chain; its full sequence is Bifunctional premutilin synthase (959 aa).

The tract at residues 1 to 542 is class II diterpene cyclase; the sequence is MGLSEDLHAR…ALNVPIPRFD (542 aa). The DXDD motif signature appears at 309-312; the sequence is DADM. D311 (for class II diterpene cyclase activity) is an active-site residue. The interval 543–959 is class I diterpene synthase; that stretch reads PSSISTLPAI…TANGSNGIHH (417 aa). Catalysis depends on D649, which acts as the For class I diterpene synthase activity. The Mg(2+) site is built by D649, D653, and N824. The short motif at 649-653 is the DDXXD motif element; that stretch reads DDYLD. Residues 931–959 form a disordered region; sequence KGTNGVKKINGSSTNGTKVTANGSNGIHH. The segment covering 940 to 959 has biased composition (polar residues); the sequence is NGSSTNGTKVTANGSNGIHH.

It belongs to the terpene synthase family. Requires Mg(2+) as cofactor.

The protein operates within secondary metabolite biosynthesis; terpenoid biosynthesis. Functionally, bifunctional premutilin synthase; part of the gene cluster that mediates the biosynthesis of pleuromutilin, a tricyclic diterpene showing antibacterial properties. The geranylgeranyl diphosphate (GGPP) synthase catalyzes the first step in pleuromutilin biosynthesis. GGPP is then substrate of the premutilin synthase (PS) to yield premutilin. Premutilin synthase is a bifunctional enzyme composed of the fusion of a class II diterpene cyclase (DTC) and a class I diterpene synthase (DTS), with the corresponding domains and active sites containing characteristic aspartate-rich motifs. GGPP is first converted to mutildienyl-diphosphate (MPP) at the class II DTC site. MPP is subsequently further cyclized at the class I DTS site, followed by a 1,5-hydride shift and addition of water prior to terminating deprotonation, to yield premutilin. In addition to the aforementioned GGPP synthase and bifunctional diterpene synthase, the cluster also contains three cytochrome P450 monooxygenases, a short-chain alcohol dehydrogenase, and an acyltransferase, involved in the conversion of premutilin to pleuromutilin. The cytochrome P450 monooxygenases P450-1 and P450-2 hydroxylate premutilin at C-11 and C-3, respectively, producing 11-hydroxypremutilin and 3-hydroxypremutilin. The combination of the actions of both ple5 and ple6 leads to the production of 3,11-dihydroxypremutilin. The short chain dehydrogenase SDR further converts 3,11-dihydroxypremutilin into mutilin. The acetyltransferase ATF then acetylates mutilin to produce 14-O-acetylmutilin. Finally, the cytochrome P450 monooxygenase P450-3 catalyzes hydroxylation on the alpha position of the acetyl side chain of 14-O-acetylmutilin to yield pleuromutilin. This Clitopilus passeckerianus (Pleurotus passeckerianus) protein is Bifunctional premutilin synthase.